The sequence spans 339 residues: 2-oxoisovalerate dehydrogenase subunit beta (339 aa).

As to quaternary structure, heterodimer of an alpha and a beta chain. Thiamine diphosphate is required as a cofactor.

It carries out the reaction N(6)-[(R)-lipoyl]-L-lysyl-[protein] + 3-methyl-2-oxobutanoate + H(+) = N(6)-[(R)-S(8)-2-methylpropanoyldihydrolipoyl]-L-lysyl-[protein] + CO2. The branched-chain alpha-keto dehydrogenase complex catalyzes the overall conversion of alpha-keto acids to acyl-CoA and CO(2). It contains multiple copies of three enzymatic components: branched-chain alpha-keto acid decarboxylase (E1), lipoamide acyltransferase (E2) and lipoamide dehydrogenase (E3). This Pseudomonas putida (Arthrobacter siderocapsulatus) protein is 2-oxoisovalerate dehydrogenase subunit beta (bkdA2).